Consider the following 1257-residue polypeptide: ATP-binding cassette sub-family B member 5 (1257 aa).

Residues 1–24 (MENSERAEEMQENYQRNGTAEEQP) are disordered. N-linked (GlcNAc...) asparagine glycosylation is present at Asn17. A helical transmembrane segment spans residues 49 to 69 (ILGILASLVNGACLPLMPLVL). An ABC transmembrane type-1 1 domain is found at 49-350 (ILGILASLVN…AAVPHFETFA (302 aa)). 2 N-linked (GlcNAc...) asparagine glycosylation sites follow: Asn85 and Asn91. Transmembrane regions (helical) follow at residues 110–130 (YVGI…LWII), 181–201 (KIAL…VGLV), 203–223 (GWKL…SAAA), 294–314 (VYFF…SLIL), and 322–342 (IGTV…IGAA). Residues Asn371, Asn390, and Asn423 are each glycosylated (N-linked (GlcNAc...) asparagine). The ABC transporter 1 domain occupies 386 to 622 (VEFKNVSFNY…RGLYYSLVMS (237 aa)). 421-428 (GLNGSGKS) is a binding site for ATP. Transmembrane regions (helical) follow at residues 693 to 713 (VLGT…SIIF) and 737 to 757 (MIFV…GLFY). The region spanning 693–980 (VLGTLASVLN…TLVLAPEYSK (288 aa)) is the ABC transmembrane type-1 2 domain. N-linked (GlcNAc...) asparagine glycans are attached at residues Asn789 and Asn819. Residues 827 to 847 (VIISFIYGWEMTFLILSIAPV) traverse the membrane as a helical segment. N-linked (GlcNAc...) asparagine glycosylation is present at Asn910. Transmembrane regions (helical) follow at residues 917 to 937 (IIGS…AAGF) and 954 to 974 (MFIV…TLVL). In terms of domain architecture, ABC transporter 2 spans 1015 to 1253 (LEFREVSFFY…RDIYFKLVNA (239 aa)). 1050–1057 (GSSGCGKS) is a binding site for ATP. Asn1104 and Asn1188 each carry an N-linked (GlcNAc...) asparagine glycan.

The protein belongs to the ABC transporter superfamily. ABCB family. Multidrug resistance exporter (TC 3.A.1.201) subfamily. Expressed by CD133-expressing progenitor cells among epidermal melanocytes (at protein level). Widely expressed with specific expression in pigment cells. Highly expressed in several malignant tissues: highly expressed in clinical melanomas, with low expression in normal skin. In melanoma, marks malignant melanoma-initiating cells (MMIC), in which clinical virulence resides as a consequence of unlimited self-renewal capacity, resulting in inexorable tumor progression and metastasis. Also highly expressed in a number of leukemia cells. Expressed in basal limbal epithelium.

The protein resides in the cell membrane. The catalysed reaction is daunorubicin(in) + ATP + H2O = daunorubicin(out) + ADP + phosphate + H(+). Energy-dependent efflux transporter responsible for decreased drug accumulation in multidrug-resistant cells. Specifically present in limbal stem cells, where it plays a key role in corneal development and repair. This is ATP-binding cassette sub-family B member 5 from Homo sapiens (Human).